A 160-amino-acid polypeptide reads, in one-letter code: Ureidoglycolate lyase (160 aa).

Belongs to the ureidoglycolate lyase family. In terms of assembly, homodimer. The cofactor is Ni(2+).

The enzyme catalyses (S)-ureidoglycolate = urea + glyoxylate. It participates in nitrogen metabolism; (S)-allantoin degradation. Its function is as follows. Catalyzes the catabolism of the allantoin degradation intermediate (S)-ureidoglycolate, generating urea and glyoxylate. Involved in the anaerobic utilization of allantoin as sole nitrogen source. Reinforces the induction of genes involved in the degradation of allantoin and glyoxylate by producing glyoxylate. This Escherichia coli O6:H1 (strain CFT073 / ATCC 700928 / UPEC) protein is Ureidoglycolate lyase.